A 538-amino-acid chain; its full sequence is uncharacterized protein (538 aa).

The first 17 residues, 1–17, serve as a signal peptide directing secretion; it reads MSFSATILFSPPSGSEA. Positions 101–131 are disordered; the sequence is RQGKVSIPDEDGESRAHSSPPEEPGPLKESP. Glycyl lysine isopeptide (Lys-Gly) (interchain with G-Cter in SUMO2) cross-links involve residues K128 and K221. Phosphoserine is present on S224. A disordered region spans residues 233–253; the sequence is RATPETGPENGTKLPPPRPED. Residues S285 and S428 each carry the phosphoserine modification. The disordered stretch occupies residues 488–523; it reads LPPELYNPNFQEEEDEGGDENAPGSPSFDQPHKTCC.

Its subcellular location is the secreted. This is an uncharacterized protein from Homo sapiens (Human).